Here is a 273-residue protein sequence, read N- to C-terminus: tRNA pseudouridine synthase A (273 aa).

D52 acts as the Nucleophile in catalysis. Y110 is a substrate binding site.

The protein belongs to the tRNA pseudouridine synthase TruA family. As to quaternary structure, homodimer.

The enzyme catalyses uridine(38/39/40) in tRNA = pseudouridine(38/39/40) in tRNA. Formation of pseudouridine at positions 38, 39 and 40 in the anticodon stem and loop of transfer RNAs. In Cupriavidus pinatubonensis (strain JMP 134 / LMG 1197) (Cupriavidus necator (strain JMP 134)), this protein is tRNA pseudouridine synthase A.